The sequence spans 71 residues: Peptide Ctri10261 (71 aa).

A signal peptide spans 1 to 23 (MKIPLILVTIAIILLMVPTESDA). A Phenylalanine amide modification is found at Phe37. A propeptide spanning residues 41-71 (SLKNRDYFDYMQDPSLSNADLRELEELLEDY) is cleaved from the precursor.

It belongs to the non-disulfide-bridged peptide (NDBP) superfamily. Short antimicrobial peptide (group 4) family. Expressed by the venom gland.

Its subcellular location is the secreted. Functionally, antimicrobial peptide. The polypeptide is Peptide Ctri10261 (Chaerilus tricostatus (Scorpion)).